The chain runs to 122 residues: Large ribosomal subunit protein uL14 (122 aa).

It belongs to the universal ribosomal protein uL14 family. As to quaternary structure, part of the 50S ribosomal subunit. Forms a cluster with proteins L3 and L19. In the 70S ribosome, L14 and L19 interact and together make contacts with the 16S rRNA in bridges B5 and B8.

Functionally, binds to 23S rRNA. Forms part of two intersubunit bridges in the 70S ribosome. This chain is Large ribosomal subunit protein uL14, found in Campylobacter lari (strain RM2100 / D67 / ATCC BAA-1060).